Here is a 341-residue protein sequence, read N- to C-terminus: HTH-type transcriptional repressor PurR (341 aa).

Positions 2–56 (ATIKDVAKHAGVSTTTVSHVINKTRFVAENTKAAVWAAIKELHYSPSAVARSLKV) constitute an HTH lacI-type domain. The H-T-H motif DNA-binding region spans 4-23 (IKDVAKHAGVSTTTVSHVIN). The DNA-binding element occupies 48–56 (SAVARSLKV). Hypoxanthine contacts are provided by tyrosine 73, arginine 190, threonine 192, phenylalanine 221, and aspartate 275.

In terms of assembly, homodimer.

The protein operates within purine metabolism; purine nucleotide biosynthesis [regulation]. In terms of biological role, is the main repressor of the genes involved in the de novo synthesis of purine nucleotides, regulating purB, purC, purEK, purF, purHD, purL, purMN and guaBA expression. PurR is allosterically activated to bind its cognate DNA by binding the purine corepressors, hypoxanthine or guanine, thereby effecting transcription repression. The chain is HTH-type transcriptional repressor PurR from Yersinia pseudotuberculosis serotype O:1b (strain IP 31758).